Reading from the N-terminus, the 312-residue chain is Malate dehydrogenase (312 aa).

NAD(+)-binding positions include 7-13 and Asp-34; that span reads GAAGGIG. The substrate site is built by Arg-81 and Arg-87. NAD(+) contacts are provided by residues Asn-94 and 117 to 119; that span reads ITN. 2 residues coordinate substrate: Asn-119 and Arg-153. His-177 (proton acceptor) is an active-site residue. Met-227 lines the NAD(+) pocket.

Belongs to the LDH/MDH superfamily. MDH type 1 family. In terms of assembly, homodimer.

It catalyses the reaction (S)-malate + NAD(+) = oxaloacetate + NADH + H(+). Functionally, catalyzes the reversible oxidation of malate to oxaloacetate. The chain is Malate dehydrogenase from Yersinia pseudotuberculosis serotype O:1b (strain IP 31758).